The chain runs to 465 residues: Sushi repeat-containing protein SRPX2 (465 aa).

A signal peptide spans 1–23 (MASQLTQRGALFLLFFLTPAVTP). Sushi domains lie at 69–119 (ATCY…YCRQ), 120–178 (MRCH…VCVD), and 262–321 (RRCP…ICAP). Intrachain disulfides connect C71/C105, C91/C117, C122/C163, and C149/C176. The region spanning 177-261 (VDIDPPKIRC…SCKFIVKVQV (85 aa)) is the HYR domain. Disulfide bonds link C264–C306 and C292–C319.

As to quaternary structure, forms homooligomers. Interacts with PLAUR (via the UPAR/Ly6 domains), ADAMTS4 and CTSB. Interacts with HGF; the interaction increases the mitogenic activity of HGF. Contains chondroitin sulfate chains. In terms of tissue distribution, expressed in neurons of the rolandic area of the brain (at protein level). Highly expressed in the brain, placenta, lung, trachea, uterus, adrenal gland, heart, ovary and placenta. Weakly expressed in the peripheral blood, brain and bone marrow. Expressed in numerous cancer cell lines and in gastrointestinal cancer cells. Higher levels found in colorectal cancers than in normal colonic mucosa.

The protein resides in the secreted. The protein localises to the cytoplasm. It is found in the cell surface. Its subcellular location is the synapse. Functionally, acts as a ligand for the urokinase plasminogen activator surface receptor. Plays a role in angiogenesis by inducing endothelial cell migration and the formation of vascular network (cords). Involved in cellular migration and adhesion. Increases the phosphorylation levels of FAK. Interacts with and increases the mitogenic activity of HGF. Promotes synapse formation. May have a role in the perisylvian region, critical for language and cognitive development. This chain is Sushi repeat-containing protein SRPX2 (SRPX2), found in Homo sapiens (Human).